A 291-amino-acid chain; its full sequence is Elongation factor Ts (291 aa).

Positions 78-81 (TDFV) are involved in Mg(2+) ion dislocation from EF-Tu.

Belongs to the EF-Ts family.

Its subcellular location is the cytoplasm. Its function is as follows. Associates with the EF-Tu.GDP complex and induces the exchange of GDP to GTP. It remains bound to the aminoacyl-tRNA.EF-Tu.GTP complex up to the GTP hydrolysis stage on the ribosome. The polypeptide is Elongation factor Ts (Ureaplasma urealyticum serovar 10 (strain ATCC 33699 / Western)).